The following is a 633-amino-acid chain: Chaperone protein HtpG (633 aa).

The a; substrate-binding stretch occupies residues 1-345 (MSADTQSETL…SDDLPLNISR (345 aa)). Residues 346–562 (EMLQHNPMIS…EYDFGMGMQR (217 aa)) are b. A c region spans residues 563–633 (LLQAAGHQLP…VRRVNNLLAG (71 aa)).

Belongs to the heat shock protein 90 family. Homodimer.

The protein resides in the cytoplasm. Molecular chaperone. Has ATPase activity. This chain is Chaperone protein HtpG, found in Halorhodospira halophila (strain DSM 244 / SL1) (Ectothiorhodospira halophila (strain DSM 244 / SL1)).